A 601-amino-acid chain; its full sequence is Elongation factor 4 (601 aa).

The tr-type G domain occupies 5–187 (SNIRNFSIIA…AIVERLPAPE (183 aa)). GTP contacts are provided by residues 17–22 (DHGKST) and 134–137 (NKID).

This sequence belongs to the TRAFAC class translation factor GTPase superfamily. Classic translation factor GTPase family. LepA subfamily.

It is found in the cell inner membrane. It carries out the reaction GTP + H2O = GDP + phosphate + H(+). Its function is as follows. Required for accurate and efficient protein synthesis under certain stress conditions. May act as a fidelity factor of the translation reaction, by catalyzing a one-codon backward translocation of tRNAs on improperly translocated ribosomes. Back-translocation proceeds from a post-translocation (POST) complex to a pre-translocation (PRE) complex, thus giving elongation factor G a second chance to translocate the tRNAs correctly. Binds to ribosomes in a GTP-dependent manner. The protein is Elongation factor 4 of Oleidesulfovibrio alaskensis (strain ATCC BAA-1058 / DSM 17464 / G20) (Desulfovibrio alaskensis).